The primary structure comprises 453 residues: Ribosomal protein uS12 methylthiotransferase RimO (453 aa).

The MTTase N-terminal domain maps to 6–116; the sequence is PKVGFVSLGC…VMEAVHEALP (111 aa). Positions 15, 51, 80, 147, 151, and 154 each coordinate [4Fe-4S] cluster. Residues 133–370 form the Radical SAM core domain; the sequence is LTPRHYAYLK…MEKQAQISAA (238 aa). Residues 373-441 enclose the TRAM domain; it reads EAKIGTVQQC…EHDLYGDALP (69 aa).

It belongs to the methylthiotransferase family. RimO subfamily. [4Fe-4S] cluster is required as a cofactor.

It localises to the cytoplasm. It carries out the reaction L-aspartate(89)-[ribosomal protein uS12]-hydrogen + (sulfur carrier)-SH + AH2 + 2 S-adenosyl-L-methionine = 3-methylsulfanyl-L-aspartate(89)-[ribosomal protein uS12]-hydrogen + (sulfur carrier)-H + 5'-deoxyadenosine + L-methionine + A + S-adenosyl-L-homocysteine + 2 H(+). Its function is as follows. Catalyzes the methylthiolation of an aspartic acid residue of ribosomal protein uS12. The sequence is that of Ribosomal protein uS12 methylthiotransferase RimO from Stenotrophomonas maltophilia (strain K279a).